A 328-amino-acid chain; its full sequence is Ribosomal RNA small subunit methyltransferase H (328 aa).

S-adenosyl-L-methionine-binding positions include 37–39 (GGH), Asp-57, Phe-83, Asp-104, and Gln-111.

Belongs to the methyltransferase superfamily. RsmH family.

The protein resides in the cytoplasm. The enzyme catalyses cytidine(1402) in 16S rRNA + S-adenosyl-L-methionine = N(4)-methylcytidine(1402) in 16S rRNA + S-adenosyl-L-homocysteine + H(+). In terms of biological role, specifically methylates the N4 position of cytidine in position 1402 (C1402) of 16S rRNA. The protein is Ribosomal RNA small subunit methyltransferase H of Neisseria meningitidis serogroup C / serotype 2a (strain ATCC 700532 / DSM 15464 / FAM18).